A 461-amino-acid chain; its full sequence is Pyruvate kinase (461 aa).

R46 serves as a coordination point for substrate. K(+) is bound by residues N48 and D80. ATP is bound at residue 48–51 (NLAH). R87 and K165 together coordinate ATP. A Mg(2+)-binding site is contributed by E232. G255, D256, and T288 together coordinate substrate. Residue D256 coordinates Mg(2+).

It belongs to the pyruvate kinase family. As to quaternary structure, homotetramer. A divalent metal cation is required as a cofactor.

It carries out the reaction pyruvate + ATP = phosphoenolpyruvate + ADP + H(+). It functions in the pathway carbohydrate degradation; glycolysis; pyruvate from D-glyceraldehyde 3-phosphate: step 5/5. Not activated by classical allosteric effectors. The sequence is that of Pyruvate kinase (pyk) from Pyrobaculum aerophilum (strain ATCC 51768 / DSM 7523 / JCM 9630 / CIP 104966 / NBRC 100827 / IM2).